We begin with the raw amino-acid sequence, 74 residues long: ATP synthase subunit c (74 aa).

Transmembrane regions (helical) follow at residues 5 to 25 and 49 to 69; these read LAHI…IGVG and LFIG…VALL.

Belongs to the ATPase C chain family. As to quaternary structure, F-type ATPases have 2 components, F(1) - the catalytic core - and F(0) - the membrane proton channel. F(1) has five subunits: alpha(3), beta(3), gamma(1), delta(1), epsilon(1). F(0) has four main subunits: a(1), b(1), b'(1) and c(10-14). The alpha and beta chains form an alternating ring which encloses part of the gamma chain. F(1) is attached to F(0) by a central stalk formed by the gamma and epsilon chains, while a peripheral stalk is formed by the delta, b and b' chains.

It localises to the cell inner membrane. In terms of biological role, f(1)F(0) ATP synthase produces ATP from ADP in the presence of a proton or sodium gradient. F-type ATPases consist of two structural domains, F(1) containing the extramembraneous catalytic core and F(0) containing the membrane proton channel, linked together by a central stalk and a peripheral stalk. During catalysis, ATP synthesis in the catalytic domain of F(1) is coupled via a rotary mechanism of the central stalk subunits to proton translocation. Key component of the F(0) channel; it plays a direct role in translocation across the membrane. A homomeric c-ring of between 10-14 subunits forms the central stalk rotor element with the F(1) delta and epsilon subunits. The protein is ATP synthase subunit c of Roseobacter denitrificans (strain ATCC 33942 / OCh 114) (Erythrobacter sp. (strain OCh 114)).